Consider the following 509-residue polypeptide: ATP synthase subunit beta (509 aa).

The interval M1–A28 is disordered. Residue G187–T194 coordinates ATP.

It belongs to the ATPase alpha/beta chains family. F-type ATPases have 2 components, CF(1) - the catalytic core - and CF(0) - the membrane proton channel. CF(1) has five subunits: alpha(3), beta(3), gamma(1), delta(1), epsilon(1). CF(0) has three main subunits: a(1), b(2) and c(9-12). The alpha and beta chains form an alternating ring which encloses part of the gamma chain. CF(1) is attached to CF(0) by a central stalk formed by the gamma and epsilon chains, while a peripheral stalk is formed by the delta and b chains.

Its subcellular location is the cell inner membrane. The enzyme catalyses ATP + H2O + 4 H(+)(in) = ADP + phosphate + 5 H(+)(out). Produces ATP from ADP in the presence of a proton gradient across the membrane. The catalytic sites are hosted primarily by the beta subunits. This chain is ATP synthase subunit beta, found in Sinorhizobium medicae (strain WSM419) (Ensifer medicae).